The chain runs to 204 residues: Ras-related protein Rab-7L1 (204 aa).

Residues Ser33, Lys34, His35, Tyr36, Lys37, and Thr39 each contribute to the GTP site. An Effector region motif is present at residues 36-44 (YKSTVGVDF). Thr71 bears the Phosphothreonine; by LRRK2 mark. Position 72 is a phosphoserine (Ser72). Lys126, Val156, and Lys157 together coordinate GTP. S-geranylgeranyl cysteine attachment occurs at residues Cys203 and Cys204.

Belongs to the small GTPase superfamily. Rab family. In terms of assembly, interacts with LRRK2 (via the N-terminus); this interaction is direct and stimulates kinase activity. Expressed predominantly in kidney and much less in brain, heart, muscle, fat, liver, spleen, adrenal gland, ovary, thymus and lung. Not expressed in testis and intestine.

It localises to the cell membrane. The protein localises to the cytoplasm. Its subcellular location is the perinuclear region. The protein resides in the golgi apparatus. It is found in the golgi apparatus membrane. It localises to the trans-Golgi network. The protein localises to the cytoskeleton. In terms of biological role, the small GTPases Rab are key regulators in vesicle trafficking. Essential for maintaining the integrity of endosome-trans-Golgi network structure. Together with LRRK2, plays a role in the retrograde trafficking pathway for recycling proteins, such as mannose 6 phosphate receptor (M6PR), between lysosomes and the Golgi apparatus in a retromer-dependent manner. Recruits LRRK2 to the Golgi apparatus and stimulates LRRK2 kinase activity. Stimulates phosphorylation of RAB10 'Thr-73' by LRRK2. Regulates also neuronal process morphology in the intact central nervous system (CNS). In Rattus norvegicus (Rat), this protein is Ras-related protein Rab-7L1 (Rab29).